The sequence spans 272 residues: Cell division protein ZipA (272 aa).

Over 1-4 (METH) the chain is Periplasmic. The helical transmembrane segment at 5-25 (ILFFILAGLLIAVLIGYSIWS) threads the bilayer. The Cytoplasmic portion of the chain corresponds to 26 to 272 (ARREKSRIFS…RQNYLLRVAN (247 aa)).

This sequence belongs to the ZipA family. In terms of assembly, interacts with FtsZ via their C-terminal domains.

It is found in the cell inner membrane. In terms of biological role, essential cell division protein that stabilizes the FtsZ protofilaments by cross-linking them and that serves as a cytoplasmic membrane anchor for the Z ring. Also required for the recruitment to the septal ring of downstream cell division proteins. This Glaesserella parasuis serovar 5 (strain SH0165) (Haemophilus parasuis) protein is Cell division protein ZipA.